We begin with the raw amino-acid sequence, 169 residues long: Transmembrane protein 89 (169 aa).

Residues Met1–Gly22 form the signal peptide. Residues Trp23–Arg75 lie on the Extracellular side of the membrane. The chain crosses the membrane as a helical span at residues Ile76 to Ile96. At Val97–Gly169 the chain is on the cytoplasmic side.

Its subcellular location is the membrane. This chain is Transmembrane protein 89 (Tmem89), found in Mus musculus (Mouse).